The sequence spans 393 residues: tRNA(Met) cytidine acetate ligase (393 aa).

ATP-binding residues include glycine 81, asparagine 142, and arginine 167.

Belongs to the TmcAL family.

The protein localises to the cytoplasm. It carries out the reaction cytidine(34) in elongator tRNA(Met) + acetate + ATP = N(4)-acetylcytidine(34) in elongator tRNA(Met) + AMP + diphosphate. Functionally, catalyzes the formation of N(4)-acetylcytidine (ac(4)C) at the wobble position of elongator tRNA(Met), using acetate and ATP as substrates. First activates an acetate ion to form acetyladenylate (Ac-AMP) and then transfers the acetyl group to tRNA to form ac(4)C34. The sequence is that of tRNA(Met) cytidine acetate ligase from Bacillus cereus (strain ATCC 14579 / DSM 31 / CCUG 7414 / JCM 2152 / NBRC 15305 / NCIMB 9373 / NCTC 2599 / NRRL B-3711).